The chain runs to 405 residues: Farnesyl pyrophosphate synthase (405 aa).

2 residues coordinate Mg(2+): D158 and D162. Positions 158–162 (DDLAD) match the DDXXD motif motif.

The protein belongs to the FPP/GGPP synthase family. Requires Mg(2+) as cofactor.

It carries out the reaction isopentenyl diphosphate + (2E)-geranyl diphosphate = (2E,6E)-farnesyl diphosphate + diphosphate. It participates in pheromone biosynthesis. In terms of biological role, farnesyl pyrophosphate synthase involved in murgantiol biosynthesis, a male-released aggregation pheromone, by catalyzing the formation of (2E,6E)-farnesyl diphosphate. This chain is Farnesyl pyrophosphate synthase, found in Murgantia histrionica (Harlequin bug).